Here is a 120-residue protein sequence, read N- to C-terminus: NAD(P)H-quinone oxidoreductase subunit 3, chloroplastic (120 aa).

3 consecutive transmembrane segments (helical) span residues 9–29 (IFWAFLLISSVIPILAFLISG), 64–84 (MFALVFVVFDVETVFLYPWAM), and 88–108 (VLGVSVFLEALIFVLILIVGS).

It belongs to the complex I subunit 3 family. As to quaternary structure, NDH is composed of at least 16 different subunits, 5 of which are encoded in the nucleus.

It localises to the plastid. Its subcellular location is the chloroplast thylakoid membrane. The catalysed reaction is a plastoquinone + NADH + (n+1) H(+)(in) = a plastoquinol + NAD(+) + n H(+)(out). It carries out the reaction a plastoquinone + NADPH + (n+1) H(+)(in) = a plastoquinol + NADP(+) + n H(+)(out). Functionally, NDH shuttles electrons from NAD(P)H:plastoquinone, via FMN and iron-sulfur (Fe-S) centers, to quinones in the photosynthetic chain and possibly in a chloroplast respiratory chain. The immediate electron acceptor for the enzyme in this species is believed to be plastoquinone. Couples the redox reaction to proton translocation, and thus conserves the redox energy in a proton gradient. The sequence is that of NAD(P)H-quinone oxidoreductase subunit 3, chloroplastic from Acorus calamus var. americanus (American sweet flag).